Consider the following 227-residue polypeptide: Cytochrome c oxidase subunit 2 (227 aa).

Topologically, residues 1 to 14 (MAYPMQLGFQDATS) are mitochondrial intermembrane. Residues 15–45 (PIMEELLHFHDHTLMIVFLISSLVLYIISLM) form a helical membrane-spanning segment. Topologically, residues 46 to 59 (LTTKLTHTSTMDAQ) are mitochondrial matrix. Residues 60-87 (EVETVWTILPAVILIMIALPSLRILYMM) form a helical membrane-spanning segment. Residues 88–227 (DEINNPSLTV…HFEKWSASML (140 aa)) are Mitochondrial intermembrane-facing. Positions 161, 196, 198, 200, 204, and 207 each coordinate Cu cation. E198 serves as a coordination point for Mg(2+).

This sequence belongs to the cytochrome c oxidase subunit 2 family. Component of the cytochrome c oxidase (complex IV, CIV), a multisubunit enzyme composed of 14 subunits. The complex is composed of a catalytic core of 3 subunits MT-CO1, MT-CO2 and MT-CO3, encoded in the mitochondrial DNA, and 11 supernumerary subunits COX4I, COX5A, COX5B, COX6A, COX6B, COX6C, COX7A, COX7B, COX7C, COX8 and NDUFA4, which are encoded in the nuclear genome. The complex exists as a monomer or a dimer and forms supercomplexes (SCs) in the inner mitochondrial membrane with NADH-ubiquinone oxidoreductase (complex I, CI) and ubiquinol-cytochrome c oxidoreductase (cytochrome b-c1 complex, complex III, CIII), resulting in different assemblies (supercomplex SCI(1)III(2)IV(1) and megacomplex MCI(2)III(2)IV(2)). Found in a complex with TMEM177, COA6, COX18, COX20, SCO1 and SCO2. Interacts with TMEM177 in a COX20-dependent manner. Interacts with COX20. Interacts with COX16. Cu cation serves as cofactor.

The protein resides in the mitochondrion inner membrane. The enzyme catalyses 4 Fe(II)-[cytochrome c] + O2 + 8 H(+)(in) = 4 Fe(III)-[cytochrome c] + 2 H2O + 4 H(+)(out). In terms of biological role, component of the cytochrome c oxidase, the last enzyme in the mitochondrial electron transport chain which drives oxidative phosphorylation. The respiratory chain contains 3 multisubunit complexes succinate dehydrogenase (complex II, CII), ubiquinol-cytochrome c oxidoreductase (cytochrome b-c1 complex, complex III, CIII) and cytochrome c oxidase (complex IV, CIV), that cooperate to transfer electrons derived from NADH and succinate to molecular oxygen, creating an electrochemical gradient over the inner membrane that drives transmembrane transport and the ATP synthase. Cytochrome c oxidase is the component of the respiratory chain that catalyzes the reduction of oxygen to water. Electrons originating from reduced cytochrome c in the intermembrane space (IMS) are transferred via the dinuclear copper A center (CU(A)) of subunit 2 and heme A of subunit 1 to the active site in subunit 1, a binuclear center (BNC) formed by heme A3 and copper B (CU(B)). The BNC reduces molecular oxygen to 2 water molecules using 4 electrons from cytochrome c in the IMS and 4 protons from the mitochondrial matrix. In Tragelaphus imberbis (Lesser kudu), this protein is Cytochrome c oxidase subunit 2 (MT-CO2).